A 95-amino-acid polypeptide reads, in one-letter code: Co-chaperonin GroES (95 aa).

Belongs to the GroES chaperonin family. Heptamer of 7 subunits arranged in a ring. Interacts with the chaperonin GroEL.

The protein resides in the cytoplasm. In terms of biological role, together with the chaperonin GroEL, plays an essential role in assisting protein folding. The GroEL-GroES system forms a nano-cage that allows encapsulation of the non-native substrate proteins and provides a physical environment optimized to promote and accelerate protein folding. GroES binds to the apical surface of the GroEL ring, thereby capping the opening of the GroEL channel. The sequence is that of Co-chaperonin GroES from Chlorobium phaeobacteroides (strain BS1).